The sequence spans 221 residues: Cytidylate kinase (221 aa).

ATP is bound at residue 11 to 19 (GPCGAGKST).

The protein belongs to the cytidylate kinase family. Type 1 subfamily.

It localises to the cytoplasm. It catalyses the reaction CMP + ATP = CDP + ADP. It carries out the reaction dCMP + ATP = dCDP + ADP. The sequence is that of Cytidylate kinase from Mycoplasmopsis agalactiae (strain NCTC 10123 / CIP 59.7 / PG2) (Mycoplasma agalactiae).